The primary structure comprises 967 residues: MTETASGPARSSRAKGTKAGKGLRVERVHTTPGVHPYDEVAWERRDVVMTNWRDGSVNFEQRGVEFPEFWSVNAVNIVTSKYFRGAVGTPQREVSLKQLIDRIVKTYRKAGEDNKYFASPADAEIFEHELAYALLHQIFSFNSPVWFNVGTPQPQQVSACFILSVDDSMESILDWYKEEGMIFKGGSGAGLNLSRIRSSKELLSSGGNASGPVSFMRGADASAGTIKSGGATRRAAKMVILDVDHPDIEDFIQTKVKEEEKIRALRDAGFDMDLGGDDITSVQYQNANNSVRVNDTFMKAVQDGGKFGLTSRMTGEVIEEVDAKALFRKMAEAAWACADPGIQYDDTINAWHTCPESGRINGSNPCSEYMHLDNTSCNLASLNLMKFLKDDGKGNQSFDAERFSKVVELVITAMDISICFADFPTQKIGENTRAFRQLGIGYANLGALLMATGHAYDSDGGRALAGAITSLMTGTSYRRSAELAAIVGPYDGYARNAKPHLRVMKQHSDENAKAVRMDDLDTPIWAAATEAWQDVLRLGEKNGFRNSQASVIAPTGTIGLAMSCDTTGLEPDLALVKFKKLVGGGSMQIVNGTVPQALRRLGYQEEQIEAIVAHIAENGNVIDAPGLKPEHYEVFDCAMGERSISAMGHVRMMAAIQPWISGALSKTVNLPESATVEDVEEVYFEAWKMGVKALAIYRDNCKVGQPLSAKTKTVKDTEKAEITEKTEAAIRETVEKVVEYRPVRKRLPKGRPGITTSFTVGGAEGYMTANSYPDDGLGEVFLKMSKQGSTLAGMMDAFSIAVSVGLQYGVPLETYVSKFTNMRFEPAGMTDDPDVRMAQSIVDYIFRRLALDFLPFETRSALGIHSAEERQRHLETGSYEPSDDELDVEGLAQSAPRAQELVAVATPKAEAEAAKPAPQQAHTSAELVEMQLGIQADAPLCFSCGTKMQRAGSCYICEGCGSTSGCS.

The interval 1–23 (MTETASGPARSSRAKGTKAGKGL) is disordered. Substrate contacts are provided by residues serine 143, 159 to 160 (AC), glycine 188, 364 to 368 (NPCSE), and 554 to 558 (PTGTI). Residues cysteine 160 and cysteine 377 are joined by a disulfide bond. The active-site Proton acceptor is asparagine 364. Catalysis depends on cysteine 366, which acts as the Cysteine radical intermediate. Catalysis depends on glutamate 368, which acts as the Proton acceptor.

It belongs to the ribonucleoside diphosphate reductase class-2 family. It depends on adenosylcob(III)alamin as a cofactor.

The catalysed reaction is a 2'-deoxyribonucleoside 5'-diphosphate + [thioredoxin]-disulfide + H2O = a ribonucleoside 5'-diphosphate + [thioredoxin]-dithiol. Catalyzes the reduction of ribonucleotides to deoxyribonucleotides. May function to provide a pool of deoxyribonucleotide precursors for DNA repair during oxygen limitation and/or for immediate growth after restoration of oxygen. The chain is Vitamin B12-dependent ribonucleotide reductase (nrdJ) from Streptomyces coelicolor (strain ATCC BAA-471 / A3(2) / M145).